Here is a 183-residue protein sequence, read N- to C-terminus: Interleukin-36 beta (183 aa).

A propeptide spanning residues 1–30 (MMAFPPQSCVHVLPPKSIQMWEPNHNTMHG) is cleaved from the precursor.

Belongs to the IL-1 family. As to quaternary structure, interacts with cargo receptor TMED10; the interaction mediates the translocation from the cytoplasm into the ERGIC (endoplasmic reticulum-Golgi intermediate compartment) and thereby secretion. In terms of processing, N-terminal truncation leads to a dramatic enhancement of its activity (&gt;1000-fold).

The protein resides in the cytoplasm. It is found in the secreted. Functionally, cytokine that binds to and signals through the IL1RL2/IL-36R receptor which in turn activates NF-kappa-B and MAPK signaling pathways in target cells linked to a pro-inflammatory response. Part of the IL-36 signaling system that is thought to be present in epithelial barriers and to take part in local inflammatory response; similar to the IL-1 system with which it shares the coreceptor IL1RAP. Stimulates production of interleukin-6 and interleukin-8 in synovial fibrobasts, articular chondrocytes and mature adipocytes. Induces expression of a number of antimicrobial peptides including beta-defensin 4 and beta-defensin 103 as well as a number of matrix metalloproteases. Seems to be involved in skin inflammatory response by acting on keratinocytes, dendritic cells and indirectly on T-cells to drive tissue infiltration, cell maturation and cell proliferation. Induces the production of pro-inflammatory cytokines in bone marrow-derived dendritic cells (BMDCs), including IL-12, Il-1 beta, IL-6, TNF-alpha and IL-23, and activates p38 MAPK phosphorylation in BMDCs. Involved in dendritic cell maturation by stimulating the surface expression of CD80, CD86 and MHC class II. Induces the production of IFN-gamma, IL-4 and IL-17 by T-helper 1 (Th1) cells, cultured CD4(+) T-cells and splenocytes. This chain is Interleukin-36 beta, found in Mus musculus (Mouse).